The sequence spans 87 residues: Small ribosomal subunit protein bS20 (87 aa).

The disordered stretch occupies residues 1–22; that stretch reads MANIKSQIKRNKTNEKARLRNQ.

The protein belongs to the bacterial ribosomal protein bS20 family.

In terms of biological role, binds directly to 16S ribosomal RNA. The polypeptide is Small ribosomal subunit protein bS20 (Corynebacterium glutamicum (strain R)).